A 210-amino-acid chain; its full sequence is Glycerol-3-phosphate acyltransferase 2 (210 aa).

Transmembrane regions (helical) follow at residues 4–24 (LIMV…PAPY), 52–72 (VGFW…ALAM), 73–93 (AVAN…LMAI), 114–134 (IGIL…CFLI), 141–161 (FPTL…WLGQ), and 163–183 (DMGK…MYIP).

The protein belongs to the PlsY family. As to quaternary structure, probably interacts with PlsX.

The protein localises to the cell membrane. The enzyme catalyses an acyl phosphate + sn-glycerol 3-phosphate = a 1-acyl-sn-glycero-3-phosphate + phosphate. The protein operates within lipid metabolism; phospholipid metabolism. Catalyzes the transfer of an acyl group from acyl-phosphate (acyl-PO(4)) to glycerol-3-phosphate (G3P) to form lysophosphatidic acid (LPA). This enzyme utilizes acyl-phosphate as fatty acyl donor, but not acyl-CoA or acyl-ACP. The polypeptide is Glycerol-3-phosphate acyltransferase 2 (Dehalococcoides mccartyi (strain CBDB1)).